The primary structure comprises 347 residues: Transcription factor JunB (347 aa).

Residues lysine 4, lysine 33, and lysine 36 each participate in a glycyl lysine isopeptide (Lys-Gly) (interchain with G-Cter in SUMO2) cross-link. Residues 51–73 (KAPGARGPGPEGGGGGSYFSGQG) form a disordered region. A compositionally biased stretch (gly residues) spans 56–68 (RGPGPEGGGGGSY). Lysine 81 is covalently cross-linked (Glycyl lysine isopeptide (Lys-Gly) (interchain with G-Cter in SUMO2)). Residues threonine 102 and threonine 104 each carry the phosphothreonine modification. The residue at position 117 (serine 117) is a Phosphoserine. Lysine 141 is covalently cross-linked (Glycyl lysine isopeptide (Lys-Gly) (interchain with G-Cter in SUMO2)). Basic and acidic residues predominate over residues 239-253 (FKEEPQTVPEARSRD). A disordered region spans residues 239 to 260 (FKEEPQTVPEARSRDATPPVSP). Lysine 240 carries the N6-acetyllysine; alternate modification. Lysine 240 participates in a covalent cross-link: Glycyl lysine isopeptide (Lys-Gly) (interchain with G-Cter in SUMO1); alternate. Lysine 240 is covalently cross-linked (Glycyl lysine isopeptide (Lys-Gly) (interchain with G-Cter in SUMO2); alternate). The residue at position 251 (serine 251) is a Phosphoserine. Threonine 255 is subject to Phosphothreonine. Serine 259 carries the post-translational modification Phosphoserine. The tract at residues 268–295 (RIKVERKRLRNRLAATKCRKRKLERIAR) is basic motif. Positions 268–331 (RIKVERKRLR…AQLKQKVMTH (64 aa)) constitute a bZIP domain. The interval 296-324 (LEDKVKTLKAENAGLSSTAGLLREQVAQL) is leucine-zipper. Lysine 343 participates in a covalent cross-link: Glycyl lysine isopeptide (Lys-Gly) (interchain with G-Cter in SUMO2).

Belongs to the bZIP family. Jun subfamily. As to quaternary structure, binds DNA as a homodimer or as a heterodimer with another member of the Jun/Fos family. Component of an AP-1 transcription factor complex composed of JUN-FOS heterodimers composed of JUN-FOS heterodimers. As part of the AP-1 transcription factor complex, forms heterodimers with FOSB, thereby binding to the AP-1 consensus sequence and stimulating transcription. Interacts with ITCH (via its WW domains). Post-translationally, ubiquitinated by ITCH, leading to its degradation.

The protein resides in the nucleus. Its function is as follows. Transcription factor involved in regulating gene activity following the primary growth factor response. Binds to the DNA sequence 5'-TGA[GC]TCA-3'. Heterodimerizes with proteins of the FOS family to form an AP-1 transcription complex, thereby enhancing its DNA binding activity to an AP-1 consensus sequence and its transcriptional activity. The chain is Transcription factor JunB (JUNB) from Homo sapiens (Human).